The chain runs to 1400 residues: Tensin-2 (1400 aa).

The Phorbol-ester/DAG-type zinc-finger motif lies at 31–79 (PHSFREKVFRKKTPVCAVCKVTIDGTGVSCRVCKVATHRKCEAKVTSSC). A Phosphothreonine modification is found at Thr91. Ser118 and Ser120 each carry phosphoserine. The Phosphatase tensin-type domain maps to 122–294 (DPLMERRWDL…SYFSGLLSGS (173 aa)). The active-site Phosphocysteine intermediate is the Cys231. Residues 299–425 (SSPLFLHYVF…ASVEFVFSSS (127 aa)) form the C2 tensin-type domain. The interval 425 to 444 (SPEKVKGNTPRNDPSVSVDY) is disordered. Residues 433–444 (TPRNDPSVSVDY) are compositionally biased toward polar residues. Ser455 bears the Phosphoserine mark. Residue Tyr456 is modified to Phosphotyrosine. Position 466 is a phosphoserine (Ser466). Phosphothreonine is present on Thr474. A Phosphoserine modification is found at Ser481. Position 483 is a phosphotyrosine (Tyr483). Residues 488–536 (RVPRQTPPAPSPELPPPPMLSVSSDSGHSSTLTTEHTAESPGRPPPTAA) are disordered. Residues 492–506 (QTPPAPSPELPPPPM) are compositionally biased toward pro residues. Residue Arg555 is modified to Omega-N-methylarginine. The tract at residues 809–1114 (CGSPSEGRGY…DVTQPPEHPL (306 aa)) is disordered. Residues Ser820, Ser825, Ser830, Ser832, and Ser835 each carry the phosphoserine modification. Polar residues-rich tracts occupy residues 898–917 (CSAS…SSPV) and 929–940 (TRSPSLAPTQRL). Phosphothreonine is present on Thr909. Residues Ser931, Ser941, and Ser972 each carry the phosphoserine modification. A Phosphothreonine modification is found at Thr977. Ser991 and Ser1003 each carry phosphoserine. Residues 1046 to 1056 (PEPPQSSPTPA) show a composition bias toward pro residues. A compositionally biased stretch (polar residues) spans 1082–1098 (SGQQPSPPARSTNQHVT). Ser1087 is modified (phosphoserine). The SH2 domain maps to 1131-1238 (WYKPHLSRDQ…SLPCCLRIPS (108 aa)). Thr1173 bears the Phosphothreonine mark. Position 1238 is a phosphoserine (Ser1238). The 134-residue stretch at 1266–1399 (ACSVLYLTSV…FITKVLLGQR (134 aa)) folds into the PTB domain.

The protein belongs to the PTEN phosphatase protein family. As to quaternary structure, interacts with AXL. Interacts with SYK; leading to its phosphorylation. Interacts with SQSTM1 (via PB1 domain); the interaction leads to sequestration of TNS2 in cytoplasmic aggregates with SQSTM1 and promotes TNS2 ubiquitination and proteasomal degradation. Post-translationally, ubiquitinated following sequestration in cytoplasmic aggregates with SQSTM1, leading to proteasomal degradation. As to expression, in the adult kidney, expressed mainly in glomeruli (at protein level). In the newborn kidney, localizes on the basal surface of podocytes along the glomerular basement membrane and not in endothelial cells. Low expression levels in anabolic skeletal muscles.

Its subcellular location is the cell junction. It is found in the focal adhesion. The protein resides in the cell membrane. It localises to the cytoplasm. The catalysed reaction is O-phospho-L-tyrosyl-[protein] + H2O = L-tyrosyl-[protein] + phosphate. Functionally, tyrosine-protein phosphatase which regulates cell motility, proliferation and muscle-response to insulin. Phosphatase activity is mediated by binding to phosphatidylinositol-3,4,5-triphosphate (PtdIns(3,4,5)P3) via the SH2 domain. In muscles and under catabolic conditions, dephosphorylates IRS1 leading to its degradation and muscle atrophy. Negatively regulates PI3K-AKT pathway activation. Dephosphorylates nephrin NPHS1 in podocytes which affects mTORC1 complex activity. Under normal glucose conditions, NPHS1 outcompetes IRS1 for binding to phosphatidylinositol 3-kinase (PI3K) which balances mTORC1 activity but high glucose conditions lead to up-regulation of TNS2, increased NPHS1 dephosphorylation and activation of mTORC1, contributing to podocyte hypertrophy and proteinuria. Required for correct podocyte morphology, podocyte-glomerular basement membrane interaction and integrity of the glomerular filtration barrier. Enhances RHOA activation in the presence of DLC1. Plays a role in promoting DLC1-dependent remodeling of the extracellular matrix. This is Tensin-2 (Tns2) from Mus musculus (Mouse).